Reading from the N-terminus, the 294-residue chain is Mitochondrial substrate carrier family protein ucpB (294 aa).

Residues 1–10 (MTSQESIGIK) are Mitochondrial intermembrane-facing. Solcar repeat units lie at residues 9 to 93 (IKFL…IKNY), 101 to 187 (TNLL…IKHM), and 197 to 288 (DGLQ…LRKV). A helical membrane pass occupies residues 11-31 (FLFGGLSCMGAAVVSNPVDVL). Residues 32-67 (KTRFQIHGEGIDSKSLGLVNGTIKIIKNEGISAMYK) lie on the Mitochondrial matrix side of the membrane. The helical transmembrane segment at 68–88 (GLTPSLLREATYSTLRMGGYD) threads the bilayer. The Mitochondrial intermembrane portion of the chain corresponds to 89-106 (VIKNYFIDSNGKTNLLSK). A helical membrane pass occupies residues 107 to 127 (VTSGALSGALGACITSPTDLI). Residues 128–161 (KVRMQASSKGVKYDSISSAFKEIIAKEGIKGLWK) lie on the Mitochondrial matrix side of the membrane. A helical membrane pass occupies residues 162-182 (GVGPTTQRAALLTASQIPSYD). Topologically, residues 183–192 (HIKHMILDHG) are mitochondrial intermembrane. The chain crosses the membrane as a helical span at residues 193–213 (IIQVDGLQVHIVSSIFAGLIA). At 214-267 (SITTSPVDLVKTRIMNQPFDSNGVGLIYKSSYDCFKKTFQSEGISGLYKGFLPN) the chain is on the mitochondrial matrix side. A helical transmembrane segment spans residues 268-285 (WFRIGPHTIVTFILYEYL). The Mitochondrial intermembrane segment spans residues 286 to 294 (RKVSGIKPI).

The protein belongs to the mitochondrial carrier (TC 2.A.29) family.

It is found in the mitochondrion inner membrane. Its function is as follows. Mitochondrial solute carriers shuttle metabolites, nucleotides, and cofactors through the mitochondrial inner membrane. The polypeptide is Mitochondrial substrate carrier family protein ucpB (ucpB) (Dictyostelium discoideum (Social amoeba)).